The following is a 585-amino-acid chain: 1-deoxy-D-xylulose-5-phosphate synthase (585 aa).

Thiamine diphosphate-binding positions include His80 and 121 to 123 (GHS). A Mg(2+)-binding site is contributed by Asp152. Residues 153-154 (GS), Asn181, Tyr259, and Glu334 each bind thiamine diphosphate. Position 181 (Asn181) interacts with Mg(2+).

It belongs to the transketolase family. DXPS subfamily. Homodimer. Mg(2+) serves as cofactor. The cofactor is thiamine diphosphate.

It catalyses the reaction D-glyceraldehyde 3-phosphate + pyruvate + H(+) = 1-deoxy-D-xylulose 5-phosphate + CO2. It participates in metabolic intermediate biosynthesis; 1-deoxy-D-xylulose 5-phosphate biosynthesis; 1-deoxy-D-xylulose 5-phosphate from D-glyceraldehyde 3-phosphate and pyruvate: step 1/1. Catalyzes the acyloin condensation reaction between C atoms 2 and 3 of pyruvate and glyceraldehyde 3-phosphate to yield 1-deoxy-D-xylulose-5-phosphate (DXP). This is 1-deoxy-D-xylulose-5-phosphate synthase from Buchnera aphidicola subsp. Schizaphis graminum (strain Sg).